Here is a 397-residue protein sequence, read N- to C-terminus: Acetate kinase (397 aa).

N7 provides a ligand contact to Mg(2+). K14 is a binding site for ATP. R90 contributes to the substrate binding site. D147 acts as the Proton donor/acceptor in catalysis. Residues 207 to 211 (HLGNG), 282 to 284 (DFR), and 330 to 334 (GLGEN) contribute to the ATP site. E383 is a Mg(2+) binding site.

The protein belongs to the acetokinase family. In terms of assembly, homodimer. The cofactor is Mg(2+). Mn(2+) serves as cofactor.

The protein resides in the cytoplasm. It carries out the reaction acetate + ATP = acetyl phosphate + ADP. It participates in metabolic intermediate biosynthesis; acetyl-CoA biosynthesis; acetyl-CoA from acetate: step 1/2. Functionally, catalyzes the formation of acetyl phosphate from acetate and ATP. Can also catalyze the reverse reaction. This Clostridium botulinum (strain Loch Maree / Type A3) protein is Acetate kinase.